A 125-amino-acid polypeptide reads, in one-letter code: Large ribosomal subunit protein bL12 (125 aa).

The protein belongs to the bacterial ribosomal protein bL12 family. In terms of assembly, homodimer. Part of the ribosomal stalk of the 50S ribosomal subunit. Forms a multimeric L10(L12)X complex, where L10 forms an elongated spine to which 2 to 4 L12 dimers bind in a sequential fashion. Binds GTP-bound translation factors.

Its function is as follows. Forms part of the ribosomal stalk which helps the ribosome interact with GTP-bound translation factors. Is thus essential for accurate translation. The chain is Large ribosomal subunit protein bL12 from Sphingopyxis alaskensis (strain DSM 13593 / LMG 18877 / RB2256) (Sphingomonas alaskensis).